The primary structure comprises 166 residues: Twist-related protein (166 aa).

The segment covering 1–18 has biased composition (low complexity); that stretch reads MMQEESSSPVSPVDSLSN. Positions 1–83 are disordered; the sequence is MMQEESSSPV…RVMANVRERQ (83 aa). Residues 28 to 39 are compositionally biased toward basic residues; it reads SKRGCRKRRSAR. Residues 57–75 show a composition bias toward polar residues; that stretch reads ASSTGSSPQSFEELQSQRV. The region spanning 72–123 is the bHLH domain; the sequence is SQRVMANVRERQRTQSLNEAFSSLRKIIPTLPSDKLSKIQTLKLASRYIDFL.

In terms of assembly, efficient DNA binding requires dimerization with another bHLH protein. Homodimer. Subset of mesodermal cells.

The protein localises to the nucleus. Probable transcription factor, which may be involved, with other proteins, in establishing the pattern of cell type-specific gene expression in mesodermal cell subgroups. The polypeptide is Twist-related protein (twist1) (Xenopus laevis (African clawed frog)).